Consider the following 375-residue polypeptide: Succinyl-diaminopimelate desuccinylase (375 aa).

Histidine 66 lines the Zn(2+) pocket. The active site involves aspartate 68. Residue aspartate 99 coordinates Zn(2+). Glutamate 133 serves as the catalytic Proton acceptor. Residues glutamate 134, glutamate 162, and histidine 348 each contribute to the Zn(2+) site.

The protein belongs to the peptidase M20A family. DapE subfamily. In terms of assembly, homodimer. It depends on Zn(2+) as a cofactor. Co(2+) is required as a cofactor.

The enzyme catalyses N-succinyl-(2S,6S)-2,6-diaminopimelate + H2O = (2S,6S)-2,6-diaminopimelate + succinate. It functions in the pathway amino-acid biosynthesis; L-lysine biosynthesis via DAP pathway; LL-2,6-diaminopimelate from (S)-tetrahydrodipicolinate (succinylase route): step 3/3. In terms of biological role, catalyzes the hydrolysis of N-succinyl-L,L-diaminopimelic acid (SDAP), forming succinate and LL-2,6-diaminopimelate (DAP), an intermediate involved in the bacterial biosynthesis of lysine and meso-diaminopimelic acid, an essential component of bacterial cell walls. This is Succinyl-diaminopimelate desuccinylase from Stenotrophomonas maltophilia (strain K279a).